Here is a 331-residue protein sequence, read N- to C-terminus: Fructose-1,6-bisphosphatase class 1 2 (331 aa).

Glu80, Asp98, Leu100, and Asp101 together coordinate Mg(2+). Substrate is bound by residues 101–104 and Asn189; that span reads DGSS. Glu261 is a Mg(2+) binding site.

The protein belongs to the FBPase class 1 family. As to quaternary structure, homotetramer. Mg(2+) serves as cofactor.

It is found in the cytoplasm. It carries out the reaction beta-D-fructose 1,6-bisphosphate + H2O = beta-D-fructose 6-phosphate + phosphate. Its pathway is carbohydrate biosynthesis; Calvin cycle. This Cereibacter sphaeroides (strain ATCC 17029 / ATH 2.4.9) (Rhodobacter sphaeroides) protein is Fructose-1,6-bisphosphatase class 1 2.